The chain runs to 210 residues: Thymidylate kinase (210 aa).

Residue 10-17 coordinates ATP; sequence GLEGAGKS.

This sequence belongs to the thymidylate kinase family.

It carries out the reaction dTMP + ATP = dTDP + ADP. Functionally, phosphorylation of dTMP to form dTDP in both de novo and salvage pathways of dTTP synthesis. This is Thymidylate kinase from Haemophilus influenzae (strain PittGG).